The chain runs to 81 residues: MLPQAIESSGSQNCCSIARVWKIGRKKFTNINRVNGKLANPSKFRCLMPRSPVGTMPTKLTHLLCPNSLPCFGDRARIQPI.

This is an uncharacterized protein from Synechocystis sp. (strain ATCC 27184 / PCC 6803 / Kazusa).